A 313-amino-acid chain; its full sequence is Protein FixB (313 aa).

255–283 serves as a coordination point for FAD; it reads LYLAVGISGQIQHMVGANASQTIFAINKD.

The protein belongs to the ETF alpha-subunit/FixB family. In terms of assembly, heterodimer of FixA and FixB.

The protein operates within amine and polyamine metabolism; carnitine metabolism. In terms of biological role, required for anaerobic carnitine reduction. May bring reductant to CaiA. The sequence is that of Protein FixB from Escherichia coli O17:K52:H18 (strain UMN026 / ExPEC).